The sequence spans 615 residues: Elongation factor 4 (615 aa).

The tr-type G domain occupies 17–198; sequence ASIRNFCIIA…RVSRTIPAPV (182 aa). Residues 29–34 and 145–148 each bind GTP; these read DHGKST and NKID.

The protein belongs to the TRAFAC class translation factor GTPase superfamily. Classic translation factor GTPase family. LepA subfamily.

The protein resides in the cell membrane. The enzyme catalyses GTP + H2O = GDP + phosphate + H(+). Functionally, required for accurate and efficient protein synthesis under certain stress conditions. May act as a fidelity factor of the translation reaction, by catalyzing a one-codon backward translocation of tRNAs on improperly translocated ribosomes. Back-translocation proceeds from a post-translocation (POST) complex to a pre-translocation (PRE) complex, thus giving elongation factor G a second chance to translocate the tRNAs correctly. Binds to ribosomes in a GTP-dependent manner. In Clavibacter michiganensis subsp. michiganensis (strain NCPPB 382), this protein is Elongation factor 4.